We begin with the raw amino-acid sequence, 215 residues long: Sodium channel regulatory subunit beta-3 (215 aa).

The signal sequence occupies residues 1–24 (MPAFNRLLPLASLVLIYWVRVCFP). The region spanning 25–138 (VCVEVPSETE…EAHRPFVKTT (114 aa)) is the Ig-like C2-type domain. The Extracellular portion of the chain corresponds to 25-156 (VCVEVPSETE…EEAGEDFTSV (132 aa)). Cystine bridges form between C26–C48 and C45–C120. N95, N109, N113, and N121 each carry an N-linked (GlcNAc...) asparagine glycan. A helical transmembrane segment spans residues 157 to 178 (VSEIMMYILLVFLTLWLFIEMI). Over 179–215 (YCYRKVSKAEEAAQENASDYLAIPSENKENSVVPVEE) the chain is Cytoplasmic.

This sequence belongs to the sodium channel auxiliary subunit SCN3B (TC 8.A.17) family. A voltage-gated sodium (Nav) channel consists of an ion-conducting pore-forming alpha subunit functional on its own that is regulated by one or more beta subunits. Forms homodimers and homotrimers. SCN3B is non-covalently associated with alpha subunits and induces the formation of alpha subunit oligomers, including trimers. Interacts with SCN5A/Nav1.5; regulatory subunit of SCN5A/Nav1.5. Interacts with SCN7A/Nav2.1; probable regulatory subunit of SCN7A/Nav2.1. Interacts with SCN10A; regulatory subunit of SCN10A/Nav1.8. Interacts with NFASC; probably involved in targeting the sodium channels to the nodes of Ranvier. Post-translationally, intramolecular disulfide bonds favor the voltage-gated sodium channel oligomeric complex assembly. In terms of processing, N-glycosylated.

Its subcellular location is the cell membrane. Functionally, regulatory subunit of multiple voltage-gated sodium (Nav) channels directly mediating the depolarization of excitable membranes. Navs, also called VGSCs (voltage-gated sodium channels) or VDSCs (voltage-dependent sodium channels), operate by switching between closed and open conformations depending on the voltage difference across the membrane. In the open conformation they allow Na(+) ions to selectively pass through the pore, along their electrochemical gradient. The influx of Na+ ions provokes membrane depolarization, initiating the propagation of electrical signals throughout cells and tissues. The accessory beta subunits participate in localization and functional modulation of the Nav channels. Modulates the activity of SCN2A/Nav1.2, causing a hyperpolarizing shift in the voltage-dependence of inactivation of the channel and increasing the fraction of channels operating in the fast gating mode. Modulates the activity of SCN5A/Nav1.5. Could also regulate the atypical sodium channel SCN7A/Nav2.1. Modulates the activity of SCN10A/Nav1.8, regulating its oligomerization and accelerating the recovery from inactivation. The protein is Sodium channel regulatory subunit beta-3 of Mus musculus (Mouse).